The chain runs to 482 residues: ATP synthase subunit beta (482 aa).

Residue 162-169 (GGAGVGKT) participates in ATP binding.

It belongs to the ATPase alpha/beta chains family. In terms of assembly, F-type ATPases have 2 components, CF(1) - the catalytic core - and CF(0) - the membrane proton channel. CF(1) has five subunits: alpha(3), beta(3), gamma(1), delta(1), epsilon(1). CF(0) has four main subunits: a(1), b(1), b'(1) and c(9-12).

It is found in the cellular thylakoid membrane. It catalyses the reaction ATP + H2O + 4 H(+)(in) = ADP + phosphate + 5 H(+)(out). Functionally, produces ATP from ADP in the presence of a proton gradient across the membrane. The catalytic sites are hosted primarily by the beta subunits. The chain is ATP synthase subunit beta from Trichormus variabilis (strain ATCC 29413 / PCC 7937) (Anabaena variabilis).